A 379-amino-acid polypeptide reads, in one-letter code: MNTLSNTITVAVVGGEGIGPEVTDQSHRILKWFSDRRGAPVILREAQYGLIPYLATGKVLPDDTVEAMEEADAILWGATGGPETTEVPPAARKAGSLLSLRSKYDLYANLRPIVANPALADSAPLKAAVLKDVDFIIIRELTSGIYFGEPRGIETLPDGQRRGFNTQQYTTSQIRRVARTAFELARTRKGRVCSVDKANVLETSVLWREEVTALHEAEFSDVELTHLYVDNAAMQIVRAPSQFDVMVTCNIFGDILSDCAAMASGSLGMLPSVSLGPPDRLGRRKALYEPVHGSAPDIAGKGIANPLGSILSVAMMLRITLHRPEDAALLEKAVDTALAAGARTADIAEPGAKRLSTQEMGDAVLNALDKVVGKEREHA.

Substrate contacts are provided by Arg-101, Arg-111, Arg-139, and Asp-230. Residues Asp-230, Asp-254, and Asp-258 each coordinate Mg(2+). 293–305 provides a ligand contact to NAD(+); it reads GSAPDIAGKGIAN.

This sequence belongs to the isocitrate and isopropylmalate dehydrogenases family. LeuB type 1 subfamily. As to quaternary structure, homodimer. The cofactor is Mg(2+). Mn(2+) is required as a cofactor.

The protein resides in the cytoplasm. The catalysed reaction is (2R,3S)-3-isopropylmalate + NAD(+) = 4-methyl-2-oxopentanoate + CO2 + NADH. It participates in amino-acid biosynthesis; L-leucine biosynthesis; L-leucine from 3-methyl-2-oxobutanoate: step 3/4. Functionally, catalyzes the oxidation of 3-carboxy-2-hydroxy-4-methylpentanoate (3-isopropylmalate) to 3-carboxy-4-methyl-2-oxopentanoate. The product decarboxylates to 4-methyl-2 oxopentanoate. The polypeptide is 3-isopropylmalate dehydrogenase 1 (Bradyrhizobium diazoefficiens (strain JCM 10833 / BCRC 13528 / IAM 13628 / NBRC 14792 / USDA 110)).